A 535-amino-acid chain; its full sequence is CTP synthase (535 aa).

An amidoligase domain region spans residues 1-267 (MTKYIFVTGG…DQIVCDHLKL (267 aa)). Position 13 (Ser13) interacts with CTP. Residue Ser13 participates in UTP binding. Residue 14-19 (SLGKGI) coordinates ATP. L-glutamine is bound at residue Tyr54. An ATP-binding site is contributed by Asp71. Mg(2+) is bound by residues Asp71 and Glu141. CTP-binding positions include 148–150 (DIE), 188–193 (KTKPTQ), and Lys224. Residues 188-193 (KTKPTQ) and Lys224 each bind UTP. An ATP-binding site is contributed by 240–242 (RDA). One can recognise a Glutamine amidotransferase type-1 domain in the interval 292 to 534 (KIALVGKYVE…VRASITNKES (243 aa)). Gly354 is an L-glutamine binding site. Catalysis depends on Cys381, which acts as the Nucleophile; for glutamine hydrolysis. L-glutamine contacts are provided by residues 382-385 (LGMQ), Glu405, and Arg462. Catalysis depends on residues His507 and Glu509.

This sequence belongs to the CTP synthase family. In terms of assembly, homotetramer.

The catalysed reaction is UTP + L-glutamine + ATP + H2O = CTP + L-glutamate + ADP + phosphate + 2 H(+). It carries out the reaction L-glutamine + H2O = L-glutamate + NH4(+). It catalyses the reaction UTP + NH4(+) + ATP = CTP + ADP + phosphate + 2 H(+). The protein operates within pyrimidine metabolism; CTP biosynthesis via de novo pathway; CTP from UDP: step 2/2. Its activity is regulated as follows. Allosterically activated by GTP, when glutamine is the substrate; GTP has no effect on the reaction when ammonia is the substrate. The allosteric effector GTP functions by stabilizing the protein conformation that binds the tetrahedral intermediate(s) formed during glutamine hydrolysis. Inhibited by the product CTP, via allosteric rather than competitive inhibition. Its function is as follows. Catalyzes the ATP-dependent amination of UTP to CTP with either L-glutamine or ammonia as the source of nitrogen. Regulates intracellular CTP levels through interactions with the four ribonucleotide triphosphates. This is CTP synthase from Bacillus cereus (strain G9842).